Here is a 366-residue protein sequence, read N- to C-terminus: Cytochrome c mitochondrial import factor CYC2 (366 aa).

The transit peptide at 1–50 (MLWKNYVLSSSRITRRLHKSPRKSSFSKNFFITGCLLTVGAVSSYLTYRY) directs the protein to the mitochondrion. In terms of domain architecture, FAD-binding FR-type spans 63 to 184 (SYFVKYKISH…RGPFIDYEFP (122 aa)).

FAD is required as a cofactor.

Its subcellular location is the mitochondrion inner membrane. Functionally, redox component that participates in c-type cytochrome biogenesis in the mitochondrial intermembrane space. May play a role in the reduction of heme prior to its ligation to apocytochrome c by cytochrome c heme lyase. Has oxidoreductase activity in vitro. This chain is Cytochrome c mitochondrial import factor CYC2 (CYC2), found in Saccharomyces cerevisiae (strain ATCC 204508 / S288c) (Baker's yeast).